A 427-amino-acid chain; its full sequence is Adenylosuccinate synthetase (427 aa).

GTP is bound by residues 12 to 18 (GDEGKGK) and 40 to 42 (GHT). Residue aspartate 13 is the Proton acceptor of the active site. Positions 13 and 40 each coordinate Mg(2+). IMP is bound by residues 13-16 (DEGK), 38-41 (NAGH), threonine 128, arginine 142, glutamine 223, threonine 238, and arginine 302. Residue histidine 41 is the Proton donor of the active site. Position 298–304 (298–304 (TTTGRAR)) interacts with substrate. GTP-binding positions include arginine 304, 330 to 332 (KLD), and 412 to 414 (AVG).

The protein belongs to the adenylosuccinate synthetase family. In terms of assembly, homodimer. Mg(2+) serves as cofactor.

It localises to the cytoplasm. The catalysed reaction is IMP + L-aspartate + GTP = N(6)-(1,2-dicarboxyethyl)-AMP + GDP + phosphate + 2 H(+). It participates in purine metabolism; AMP biosynthesis via de novo pathway; AMP from IMP: step 1/2. Its function is as follows. Plays an important role in the de novo pathway of purine nucleotide biosynthesis. Catalyzes the first committed step in the biosynthesis of AMP from IMP. The polypeptide is Adenylosuccinate synthetase (Desulfitobacterium hafniense (strain DSM 10664 / DCB-2)).